Here is a 204-residue protein sequence, read N- to C-terminus: DNA-binding transcriptional activator EvgA (204 aa).

Residues 2-117 enclose the Response regulatory domain; it reads NAIIIDDHPL…NIIAAIEAAK (116 aa). A 4-aspartylphosphate modification is found at Asp52. The HTH luxR-type domain occupies 137 to 202; the sequence is DQQKLDSLSK…DLYTFAQRNK (66 aa). The H-T-H motif DNA-binding region spans 161–180; sequence NNDIAEKMFISNKTVSTYKS.

In terms of assembly, homodimer. Phosphorylated by EvgS.

It localises to the cytoplasm. In terms of biological role, member of the two-component regulatory system EvgS/EvgA. Regulates the expression of emrKY operon and yfdX. Also seems to control expression of at least one other multidrug efflux operon. The protein is DNA-binding transcriptional activator EvgA (evgA) of Escherichia coli O157:H7.